A 458-amino-acid polypeptide reads, in one-letter code: Cell division protein FtsZ (458 aa).

Residues 22–26 (GAGGN), 109–111 (GTG), Glu-140, Arg-144, and Asp-188 each bind GTP. The tract at residues 319 to 458 (KAEEEASKQP…IPFFKHRRQD (140 aa)) is disordered. Residues 368–379 (NTISHEAPTQSI) are compositionally biased toward polar residues. The span at 401 to 418 (KQDRKENNRPQPVENKEK) shows a compositional bias: basic and acidic residues. Positions 425 to 439 (SFSSDDSTSISQIET) are enriched in low complexity.

It belongs to the FtsZ family. In terms of assembly, homodimer. Polymerizes to form a dynamic ring structure in a strictly GTP-dependent manner. Interacts directly with several other division proteins.

It localises to the cytoplasm. Its function is as follows. Essential cell division protein that forms a contractile ring structure (Z ring) at the future cell division site. The regulation of the ring assembly controls the timing and the location of cell division. One of the functions of the FtsZ ring is to recruit other cell division proteins to the septum to produce a new cell wall between the dividing cells. Binds GTP and shows GTPase activity. The sequence is that of Cell division protein FtsZ from Lactobacillus johnsonii (strain CNCM I-12250 / La1 / NCC 533).